Here is a 395-residue protein sequence, read N- to C-terminus: Dual specificity mitogen-activated protein kinase kinase 1 (395 aa).

Residues 1–24 are disordered; that stretch reads MPKKKPTPIQLNPNPEGTAVNGTP. The segment covering 9 to 24 has biased composition (polar residues); the sequence is IQLNPNPEGTAVNGTP. Residues 68 to 363 enclose the Protein kinase domain; sequence FEKVSELGAG…LKQLMVHSFI (296 aa). ATP-binding positions include 74-82 and lysine 97; that span reads LGAGNGGVV. Residue aspartate 190 is the Proton acceptor of the active site. 2 positions are modified to phosphoserine; by RAF: serine 218 and serine 222. Residues 284–305 are disordered; that stretch reads ASSELAPRPRPPGRPISSYGPD.

This sequence belongs to the protein kinase superfamily. STE Ser/Thr protein kinase family. MAP kinase kinase subfamily. Post-translationally, activated by phosphorylation on Ser/Thr catalyzed by MAP kinase kinase kinases (RAF or MOS). As to expression, expressed in the central nervous system, kidney, liver, intestine and the hematopoietic system.

The protein localises to the cytoplasm. It localises to the cytoskeleton. The protein resides in the microtubule organizing center. It is found in the centrosome. Its subcellular location is the spindle pole body. The protein localises to the nucleus. It carries out the reaction L-seryl-[protein] + ATP = O-phospho-L-seryl-[protein] + ADP + H(+). It catalyses the reaction L-threonyl-[protein] + ATP = O-phospho-L-threonyl-[protein] + ADP + H(+). The enzyme catalyses L-tyrosyl-[protein] + ATP = O-phospho-L-tyrosyl-[protein] + ADP + H(+). In terms of biological role, dual specificity protein kinase which acts as an essential component of the MAP kinase signal transduction pathway. Binding of extracellular ligands such as growth factors, cytokines and hormones to their cell-surface receptors activates the MAPK/ERK cascade, ultimately leading to phosphorylation of a threonine and a tyrosine residue in a Thr-Glu-Tyr sequence located in MAP kinases. Depending on the cellular context, this pathway mediates diverse biological functions such as cell growth, adhesion, survival and differentiation predominantly through the regulation of transcription, metabolism and cytoskeletal rearrangements. The sequence is that of Dual specificity mitogen-activated protein kinase kinase 1 (map2k1) from Xenopus laevis (African clawed frog).